Here is a 546-residue protein sequence, read N- to C-terminus: Chaperonin GroEL (546 aa).

Residues 30-33 (TLGP), K51, 87-91 (DGTTT), G415, and D496 contribute to the ATP site. The disordered stretch occupies residues 526–546 (PEDKPAPAMPGGMGGMGGMDF). The span at 536 to 546 (GGMGGMGGMDF) shows a compositional bias: gly residues.

It belongs to the chaperonin (HSP60) family. In terms of assembly, forms a cylinder of 14 subunits composed of two heptameric rings stacked back-to-back. Interacts with the co-chaperonin GroES.

It localises to the cytoplasm. It catalyses the reaction ATP + H2O + a folded polypeptide = ADP + phosphate + an unfolded polypeptide.. In terms of biological role, together with its co-chaperonin GroES, plays an essential role in assisting protein folding. The GroEL-GroES system forms a nano-cage that allows encapsulation of the non-native substrate proteins and provides a physical environment optimized to promote and accelerate protein folding. This is Chaperonin GroEL from Zymomonas mobilis subsp. mobilis (strain ATCC 31821 / ZM4 / CP4).